Consider the following 315-residue polypeptide: Ribosomal RNA small subunit methyltransferase H (315 aa).

S-adenosyl-L-methionine is bound by residues 37–39 (GGH), Asp-57, Asp-105, and Gln-112.

The protein belongs to the methyltransferase superfamily. RsmH family.

It localises to the cytoplasm. The catalysed reaction is cytidine(1402) in 16S rRNA + S-adenosyl-L-methionine = N(4)-methylcytidine(1402) in 16S rRNA + S-adenosyl-L-homocysteine + H(+). Functionally, specifically methylates the N4 position of cytidine in position 1402 (C1402) of 16S rRNA. The protein is Ribosomal RNA small subunit methyltransferase H of Nitrosococcus oceani (strain ATCC 19707 / BCRC 17464 / JCM 30415 / NCIMB 11848 / C-107).